The following is an 858-amino-acid chain: Neural cell adhesion molecule 1 (858 aa).

Residues 1-19 form the signal peptide; the sequence is MLQTKDLIWTLFFLGTAVS. 5 consecutive Ig-like C2-type domains span residues 20 to 111, 116 to 205, 212 to 301, 308 to 413, and 416 to 501; these read LQVD…ATVN, QKLM…KDIQ, PTIQ…ATIH, PKIT…LEVQ, and PKLQ…ESLE. Residues 20–718 are Extracellular-facing; that stretch reads LQVDIVPSQG…IPANGSPTSG (699 aa). Intrachain disulfides connect Cys-41–Cys-96 and Cys-139–Cys-189. A glycan (N-linked (GlcNAc...) asparagine) is linked at Asn-222. The cysteines at positions 235 and 287 are disulfide-linked. Residues Asn-315, Asn-347, Asn-433, Asn-459, and Asn-488 are each glycosylated (N-linked (GlcNAc...) asparagine). Cys-329 and Cys-395 are joined by a disulfide. Cys-436 and Cys-489 are joined by a disulfide. 2 consecutive Fibronectin type-III domains span residues 509-608 and 611-706; these read TPSS…TQPV and EPSA…SAQP. Pro-706 carries GPI-anchor amidated asparagine lipidation. The chain crosses the membrane as a helical span at residues 719–739; it reads LSTGAIVGILIVIFVLLLVVV. Residues 740-858 lie on the Cytoplasmic side of the membrane; that stretch reads DITCYFLNKC…TQTKENESKA (119 aa). Ile-741 carries GPI-anchor amidated asparagine lipidation. The segment at 766–858 is disordered; the sequence is GAKGKDMEEG…TQTKENESKA (93 aa). Composition is skewed to basic and acidic residues over residues 768 to 809 and 817 to 834; these read KGKD…HTEP and EPEKGPVEAKPECQETET. Phosphoserine is present on residues Ser-780 and Ser-784.

As to quaternary structure, (Microbial infection) Interacts with rabies virus glycoprotein. In terms of assembly, (Microbial infection) Interacts with Zika virus envelope protein E. Interacts with MDK. Found in a complex with SLC39A6, SLC39A10 and with NCAM1; this complex controls NCAM1 phosphorylation and integration into focal adhesion complexes during epithelial-tomesenchymal transition. Interacts with synaptic plasticity regulator PANTS. In terms of processing, polysialylated at Asn-459 and Asn-488 by ST8SIA2 and ST8SIA4. Polysialylation modulates cell interactions by confering both attractive and repulsive properties that are highly regulated by ST8SIA2 and ST8SIA4. Polysialylation is formed on a-2,3-linked sialic acid of core glycans.

It is found in the cell membrane. The protein resides in the secreted. This protein is a cell adhesion molecule involved in neuron-neuron adhesion, neurite fasciculation, outgrowth of neurites, etc. In terms of biological role, (Microbial infection) Acts as a receptor for rabies virus. Its function is as follows. (Microbial infection) Acts as a receptor for Zika virus. The chain is Neural cell adhesion molecule 1 from Homo sapiens (Human).